The following is a 302-amino-acid chain: Ribosome-binding factor PSRP1, chloroplastic (302 aa).

A chloroplast-targeting transit peptide spans 1–66 (MATLCTSAIN…SRNKPNVVCM (66 aa)).

As to quaternary structure, binds to the mRNA channel of the chloroplast small ribosomal subunit and interacts with 16S sRNA nucleotides at the A-site and P-site.

The protein localises to the plastid. Its subcellular location is the chloroplast stroma. In terms of biological role, ribosome-binding factor involved in light- and temperature-dependent control of protein synthesis. Interacts with 16S sRNA nucleotides at the A-site and P-site, where it protects the decoding center and inhibits translation by preventing tRNA binding. Stabilizes 70S ribosomes against dissociation. May be recycled by the combined action of ribosome-recycling factor (RRF) and EF-G. The protein is Ribosome-binding factor PSRP1, chloroplastic (PSRP1) of Spinacia oleracea (Spinach).